The sequence spans 190 residues: Small ribosomal subunit protein uS5 (190 aa).

The S5 DRBM domain maps to 21-84 (FADRLVAINR…EQAKRQMIRV (64 aa)). Positions 156 to 190 (KKEQSPRSVAQRRGKKVADILPKRDEAPAAEAAEA) are disordered. Over residues 171 to 182 (KVADILPKRDEA) the composition is skewed to basic and acidic residues.

This sequence belongs to the universal ribosomal protein uS5 family. Part of the 30S ribosomal subunit. Contacts proteins S4 and S8.

In terms of biological role, with S4 and S12 plays an important role in translational accuracy. Functionally, located at the back of the 30S subunit body where it stabilizes the conformation of the head with respect to the body. This Ruegeria pomeroyi (strain ATCC 700808 / DSM 15171 / DSS-3) (Silicibacter pomeroyi) protein is Small ribosomal subunit protein uS5.